The sequence spans 341 residues: Bis(monoacylglycero)phosphate synthase CLN5 (341 aa).

At methionine 1–proline 13 the chain is on the cytoplasmic side. The helical; Signal-anchor for type II membrane protein transmembrane segment at alanine 14–proline 30 threads the bilayer. The Lumenal portion of the chain corresponds to threonine 31 to leucine 341. 2 disulfide bridges follow: cysteine 53–cysteine 142 and cysteine 60–cysteine 148. Histidine 100 serves as the catalytic Proton acceptor. Residues asparagine 113, asparagine 126, asparagine 161, and asparagine 186 are each glycosylated (N-linked (GlcNAc...) asparagine). The active-site Nucleophile; Acyl-thioester intermediate is the cysteine 214. N-linked (GlcNAc...) asparagine glycans are attached at residues asparagine 238, asparagine 254, and asparagine 264. The membrane-anchoring stretch occupies residues phenylalanine 287–tyrosine 326.

It belongs to the CLN5 family. As to quaternary structure, multimer. Interacts with PPT1, TPP1, CLN3, CLN6, CLN8, ATP5F1A and ATP5F1B. Interacts with SORT1, RAB5A and RAB7A. In terms of processing, N-glycosylated with both high mannose and complex type sugars. Glycosylation is important for proper folding and trafficking to the lysosomes. Post-translationally, the type II membrane signal anchor is proteolytically cleaved to produce a mature form that is transported to the lysosomes (Bis(monoacylglycero)phosphate synthase CLN5, secreted form). Can undergo proteolytic cleavage at the C-terminus, probably by a cysteine protease and may involve the removal of approximately 10-15 residues from the C-terminal end. Heart, kidney, liver, spleen, muscle and rectum (at protein level).

It is found in the lysosome. The protein resides in the membrane. It catalyses the reaction S-hexadecanoyl-L-cysteinyl-[protein] + H2O = L-cysteinyl-[protein] + hexadecanoate + H(+). It carries out the reaction 2 1-acyl-sn-glycero-3-phospho-(1'-sn-glycerol) = 1-acyl-sn-glycero-3-phospho-(3'-acyl-sn-1'-glycerol) + sn-glycero-3-phospho-(1'-sn-glycerol). The catalysed reaction is 2 1-(9Z-octadecenoyl)-sn-glycero-3-phospho-(1'-sn-glycerol) = 1-(9Z-octadecenoyl)-sn-glycero-3-phospho-(3'-(9Z-octadecenoyl)-1'-sn-glycerol) + sn-glycero-3-phospho-(1'-sn-glycerol). The enzyme catalyses 2 1-octadecanoyl-sn-glycero-3-phospho-(1'-sn-glycerol) = 1-octadecanoyl-sn-glycero-3-phospho-(3'-octadecanoyl-1'-sn-glycerol) + sn-glycero-3-phospho-(1'-sn-glycerol). It catalyses the reaction 2 1-hexadecanoyl-sn-glycero-3-phospho-(1'-sn-glycerol) = 1-hexadecanoyl-sn-glycero-3-phospho-(3'-hexadecanoyl-1'-sn-glycerol) + sn-glycero-3-phospho-(1'-sn-glycerol). It carries out the reaction 2 1-tetradecanoyl-sn-glycero-3-phospho-(1'-sn-glycerol) = 1-tetradecanoyl-sn-glycero-3-phospho-(3'-tetradecanoyl-1'-sn-glycerol) + sn-glycero-3-phospho-(1'-sn-glycerol). Its function is as follows. Catalyzes the synthesis of bis(monoacylglycero)phosphate (BMP) via transacylation of 2 molecules of lysophosphatidylglycerol (LPG). BMP also known as lysobisphosphatidic acid plays a key role in the formation of intraluminal vesicles and in maintaining intracellular cholesterol homeostasis. Can use only LPG as the exclusive lysophospholipid acyl donor for base exchange and displays BMP synthase activity towards various LPGs (LPG 14:0, LPG 16:0, LPG 18:0, LPG 18:1) with a higher preference for longer chain lengths. Plays a role in influencing the retrograde trafficking of lysosomal sorting receptors SORT1 and IGF2R from the endosomes to the trans-Golgi network by controlling the recruitment of retromer complex to the endosomal membrane. Regulates the localization and activation of RAB7A which is required to recruit the retromer complex to the endosomal membrane. In terms of biological role, exhibits palmitoyl protein thioesterase (S-depalmitoylation) activity in vitro and most likely plays a role in protein S-depalmitoylation. This Mus musculus (Mouse) protein is Bis(monoacylglycero)phosphate synthase CLN5 (Cln5).